The primary structure comprises 172 residues: S-ribosylhomocysteine lyase (172 aa).

Fe cation-binding residues include His-54, His-58, and Cys-128.

It belongs to the LuxS family. In terms of assembly, homodimer. Fe cation is required as a cofactor.

It carries out the reaction S-(5-deoxy-D-ribos-5-yl)-L-homocysteine = (S)-4,5-dihydroxypentane-2,3-dione + L-homocysteine. Functionally, involved in the synthesis of autoinducer 2 (AI-2) which is secreted by bacteria and is used to communicate both the cell density and the metabolic potential of the environment. The regulation of gene expression in response to changes in cell density is called quorum sensing. Catalyzes the transformation of S-ribosylhomocysteine (RHC) to homocysteine (HC) and 4,5-dihydroxy-2,3-pentadione (DPD). This chain is S-ribosylhomocysteine lyase, found in Vibrio atlanticus (strain LGP32) (Vibrio splendidus (strain Mel32)).